We begin with the raw amino-acid sequence, 627 residues long: Membrane protein insertase YidC (627 aa).

Helical transmembrane passes span 3-23 (KNTV…SWLN), 376-396 (WGLI…PLAY), 450-470 (LPML…PTTI), 502-522 (FYGN…ILYI), 534-554 (EGMA…LFFF), and 558-578 (ASGL…QYMS).

Belongs to the OXA1/ALB3/YidC family. Type 1 subfamily. Interacts with the Sec translocase complex via SecD. Specifically interacts with transmembrane segments of nascent integral membrane proteins during membrane integration.

It localises to the cell inner membrane. In terms of biological role, required for the insertion and/or proper folding and/or complex formation of integral membrane proteins into the membrane. Involved in integration of membrane proteins that insert both dependently and independently of the Sec translocase complex, as well as at least some lipoproteins. Aids folding of multispanning membrane proteins. The protein is Membrane protein insertase YidC of Porphyromonas gingivalis (strain ATCC BAA-308 / W83).